Consider the following 232-residue polypeptide: 2-C-methyl-D-erythritol 4-phosphate cytidylyltransferase (232 aa).

It belongs to the IspD/TarI cytidylyltransferase family. IspD subfamily.

It catalyses the reaction 2-C-methyl-D-erythritol 4-phosphate + CTP + H(+) = 4-CDP-2-C-methyl-D-erythritol + diphosphate. The protein operates within isoprenoid biosynthesis; isopentenyl diphosphate biosynthesis via DXP pathway; isopentenyl diphosphate from 1-deoxy-D-xylulose 5-phosphate: step 2/6. Functionally, catalyzes the formation of 4-diphosphocytidyl-2-C-methyl-D-erythritol from CTP and 2-C-methyl-D-erythritol 4-phosphate (MEP). In Deinococcus radiodurans (strain ATCC 13939 / DSM 20539 / JCM 16871 / CCUG 27074 / LMG 4051 / NBRC 15346 / NCIMB 9279 / VKM B-1422 / R1), this protein is 2-C-methyl-D-erythritol 4-phosphate cytidylyltransferase.